Consider the following 223-residue polypeptide: Chorismate dehydratase (223 aa).

It belongs to the MqnA/MqnD family. MqnA subfamily.

The enzyme catalyses chorismate = 3-[(1-carboxyvinyl)-oxy]benzoate + H2O. It functions in the pathway quinol/quinone metabolism; menaquinone biosynthesis. In terms of biological role, catalyzes the dehydration of chorismate into 3-[(1-carboxyvinyl)oxy]benzoate, a step in the biosynthesis of menaquinone (MK, vitamin K2). The sequence is that of Chorismate dehydratase from Campylobacter jejuni subsp. jejuni serotype O:23/36 (strain 81-176).